The primary structure comprises 549 residues: Dihydroxy-acid dehydratase (549 aa).

A Mg(2+)-binding site is contributed by Asp78. Cys119 is a binding site for [2Fe-2S] cluster. Mg(2+)-binding residues include Asp120 and Lys121. Lys121 is subject to N6-carboxylysine. Cys191 serves as a coordination point for [2Fe-2S] cluster. Glu441 lines the Mg(2+) pocket. Catalysis depends on Ser466, which acts as the Proton acceptor.

This sequence belongs to the IlvD/Edd family. As to quaternary structure, homodimer. The cofactor is [2Fe-2S] cluster. Mg(2+) serves as cofactor.

It carries out the reaction (2R)-2,3-dihydroxy-3-methylbutanoate = 3-methyl-2-oxobutanoate + H2O. The enzyme catalyses (2R,3R)-2,3-dihydroxy-3-methylpentanoate = (S)-3-methyl-2-oxopentanoate + H2O. It participates in amino-acid biosynthesis; L-isoleucine biosynthesis; L-isoleucine from 2-oxobutanoate: step 3/4. The protein operates within amino-acid biosynthesis; L-valine biosynthesis; L-valine from pyruvate: step 3/4. Functions in the biosynthesis of branched-chain amino acids. Catalyzes the dehydration of (2R,3R)-2,3-dihydroxy-3-methylpentanoate (2,3-dihydroxy-3-methylvalerate) into 2-oxo-3-methylpentanoate (2-oxo-3-methylvalerate) and of (2R)-2,3-dihydroxy-3-methylbutanoate (2,3-dihydroxyisovalerate) into 2-oxo-3-methylbutanoate (2-oxoisovalerate), the penultimate precursor to L-isoleucine and L-valine, respectively. This is Dihydroxy-acid dehydratase from Methanobrevibacter smithii (strain ATCC 35061 / DSM 861 / OCM 144 / PS).